The primary structure comprises 262 residues: Phosphoribosylformylglycinamidine synthase subunit PurQ (262 aa).

Residues 2–238 form the Glutamine amidotransferase type-1 domain; that stretch reads RIAVIQFPGT…FAWQLPRKHP (237 aa). Catalysis depends on Cys87, which acts as the Nucleophile. Catalysis depends on residues His223 and Glu225.

Part of the FGAM synthase complex composed of 1 PurL, 1 PurQ and 2 PurS subunits.

The protein localises to the cytoplasm. The enzyme catalyses N(2)-formyl-N(1)-(5-phospho-beta-D-ribosyl)glycinamide + L-glutamine + ATP + H2O = 2-formamido-N(1)-(5-O-phospho-beta-D-ribosyl)acetamidine + L-glutamate + ADP + phosphate + H(+). It carries out the reaction L-glutamine + H2O = L-glutamate + NH4(+). Its pathway is purine metabolism; IMP biosynthesis via de novo pathway; 5-amino-1-(5-phospho-D-ribosyl)imidazole from N(2)-formyl-N(1)-(5-phospho-D-ribosyl)glycinamide: step 1/2. Part of the phosphoribosylformylglycinamidine synthase complex involved in the purines biosynthetic pathway. Catalyzes the ATP-dependent conversion of formylglycinamide ribonucleotide (FGAR) and glutamine to yield formylglycinamidine ribonucleotide (FGAM) and glutamate. The FGAM synthase complex is composed of three subunits. PurQ produces an ammonia molecule by converting glutamine to glutamate. PurL transfers the ammonia molecule to FGAR to form FGAM in an ATP-dependent manner. PurS interacts with PurQ and PurL and is thought to assist in the transfer of the ammonia molecule from PurQ to PurL. The sequence is that of Phosphoribosylformylglycinamidine synthase subunit PurQ from Methanothrix thermoacetophila (strain DSM 6194 / JCM 14653 / NBRC 101360 / PT) (Methanosaeta thermophila).